The chain runs to 209 residues: Dual specificity protein phosphatase 22 (209 aa).

The Tyrosine-protein phosphatase domain maps to 4-144; the sequence is GMNKILTGLF…LEDFGKCEVH (141 aa). The active-site Phosphocysteine intermediate is the cysteine 88. The interval 169-192 is disordered; sequence LDKHKQQEAAESQNATSSGRQWNS. Residues 177-190 are compositionally biased toward polar residues; that stretch reads AAESQNATSSGRQW.

The protein belongs to the protein-tyrosine phosphatase family. Non-receptor class dual specificity subfamily.

The protein resides in the cytoplasm. It localises to the nucleus. It carries out the reaction O-phospho-L-tyrosyl-[protein] + H2O = L-tyrosyl-[protein] + phosphate. The enzyme catalyses O-phospho-L-seryl-[protein] + H2O = L-seryl-[protein] + phosphate. The catalysed reaction is O-phospho-L-threonyl-[protein] + H2O = L-threonyl-[protein] + phosphate. Its function is as follows. Activates the Jnk signaling pathway. Dephosphorylates and deactivates p38 and stress-activated protein kinase/c-Jun N-terminal kinase (SAPK/JNK). This chain is Dual specificity protein phosphatase 22 (dusp22), found in Xenopus laevis (African clawed frog).